Reading from the N-terminus, the 195-residue chain is Adenylate kinase (195 aa).

10-15 (GSGKGT) serves as a coordination point for ATP. The interval 30–59 (STGDILRAERAAGTLLGQQAQSYMDRGELV) is NMP. Residues threonine 31, arginine 36, 57–59 (ELV), 85–88 (GFPR), and glutamine 92 each bind AMP. Residues 126–140 (NRAKQAVNGQQRSDD) are LID. An ATP-binding site is contributed by arginine 127. AMP is bound by residues arginine 137 and arginine 148. Arginine 176 contributes to the ATP binding site.

Belongs to the adenylate kinase family. In terms of assembly, monomer.

It localises to the cytoplasm. The enzyme catalyses AMP + ATP = 2 ADP. It participates in purine metabolism; AMP biosynthesis via salvage pathway; AMP from ADP: step 1/1. Functionally, catalyzes the reversible transfer of the terminal phosphate group between ATP and AMP. Plays an important role in cellular energy homeostasis and in adenine nucleotide metabolism. This chain is Adenylate kinase, found in Thermosynechococcus vestitus (strain NIES-2133 / IAM M-273 / BP-1).